Consider the following 726-residue polypeptide: WD repeat and coiled-coil-containing protein (726 aa).

WD repeat units follow at residues 55 to 98 and 154 to 194; these read GQFE…SDKN and KSSG…LNAC. The disordered stretch occupies residues 502 to 574; that stretch reads RSYDGDQSPT…PNFIQPSDVS (73 aa). Over residues 506–515 the composition is skewed to polar residues; the sequence is GDQSPTSSAN. The segment covering 517 to 533 has biased composition (basic and acidic residues); it reads FDEKRNRLRMESFDTEP. Residues 550–574 show a composition bias toward polar residues; the sequence is SGSTSPKSECQNSSPPNFIQPSDVS. Residues 581 to 609 adopt a coiled-coil conformation; the sequence is SISRNVERLCCNFAHLQQHLSELTDITRN.

The chain is WD repeat and coiled-coil-containing protein (wdcp) from Xenopus laevis (African clawed frog).